The sequence spans 545 residues: POTE ankyrin domain family member H (545 aa).

ANK repeat units follow at residues 180–208 (LHRAAWWGKVPRKDLIVMLKDTDMNKKDK), 209–238 (QKRTALHLASANGNSEVVKLLLDRRCQLNI), 242–271 (KKRTALTKAVQCQEDECALMLLEHGTDPNI), 275–304 (YGNTALHYAIYNEDKLMAKALLLYGADIES), 308–337 (HGLTPLLLGVHEQKQQVVKFLIKKKANLNA), 341–370 (YGRTALILAVCCGSASIVSLLLEQNIDVSS), and 374–404 (SGQTAREYAVSSRHNVICQLLSDYKEKQILK). The segment at 406–524 (SSENSNPEQD…KQLSEEQNTG (119 aa)) is disordered. Composition is skewed to basic and acidic residues over residues 414-429 (QDLKLTSEEESQRLKG) and 443-458 (EINKGGDRKVEEEMKK). Residues 513–524 (TQKQLSEEQNTG) are compositionally biased toward polar residues.

The protein belongs to the POTE family.

The polypeptide is POTE ankyrin domain family member H (POTEH) (Homo sapiens (Human)).